A 503-amino-acid chain; its full sequence is Probable voltage-gated potassium channel subunit kvs-4 (503 aa).

Residues 1–231 are Cytoplasmic-facing; it reads MNSAIMQGAA…EPASSGKAQA (231 aa). Positions 217–219 match the Required for dendritic localization motif; it reads WNI. The chain crosses the membrane as a helical span at residues 232–252; the sequence is FAVCSVVFVLISISGLVLGSL. The Extracellular segment spans residues 253 to 275; that stretch reads PELQVATKQRNNLTGEEFTEMEP. The N-linked (GlcNAc...) asparagine glycan is linked to asparagine 264. Residues 276-296 form a helical membrane-spanning segment; sequence MPILGYIEYVCIVWFTMEYGL. Over 297 to 313 the chain is Cytoplasmic; the sequence is KMLVSAERSKTFRQLLN. The helical transmembrane segment at 314-334 threads the bilayer; the sequence is IIDLLAILPFIIEMLLLIFGI. Residues 335–346 are Extracellular-facing; it reads STEQLRDLKGAF. Residues 347–366 form a helical; Voltage-sensor membrane-spanning segment; it reads LVIRILRVLRVIRVLKLGRY. Topologically, residues 367-383 are cytoplasmic; sequence SSGLQMFGKTLKASFRQ. An S4-S5 linker region spans residues 368–383; it reads SGLQMFGKTLKASFRQ. The helical transmembrane segment at 384 to 404 threads the bilayer; sequence LGMMAMVVMTGVIFFSTLVYF. Residues 405–417 are Extracellular-facing; sequence LEKDEPASKFHSI. Positions 418–429 form an intramembrane region, helical; the sequence is PAACWWCIVTMT. The stretch at 430 to 434 is an intramembrane region; the sequence is TVGYG. Positions 430–435 match the Selectivity filter motif; sequence TVGYGD. Residues 435–445 are Extracellular-facing; the sequence is DLTPVTVPGKL. Residues 446–466 form a helical membrane-spanning segment; that stretch reads VATGAIACGVLVLALPITIIV. Over 467–503 the chain is Cytoplasmic; sequence DNFMKVAETERPAGGNRYRTSQYPKATKSEQMILKVT. The Required for dendritic localization motif lies at 496-500; that stretch reads EQMIL.

This sequence belongs to the potassium channel family. B (Shab) (TC 1.A.1.2) subfamily. Kv2.2/KCNB2 sub-subfamily. In terms of assembly, homotetramer or heterotetramer. Interacts with unc-101 (via N-terminus); which targets kvs-4 to dendrites. In terms of tissue distribution, expressed in the cholinergic motor neuron DA9, mechanosensory neurons ALM and PLM, and the interneuron PVPL.

Its subcellular location is the cell membrane. It localises to the perikaryon. The protein localises to the cell projection. It is found in the axon. The protein resides in the dendrite. Its function is as follows. Voltage-gated potassium channel that mediates transmembrane potassium transport in excitable membranes. The polypeptide is Probable voltage-gated potassium channel subunit kvs-4 (Caenorhabditis elegans).